The sequence spans 267 residues: Dynein axonemal assembly factor 19 homolog (267 aa).

2 disordered regions span residues 86–111 (ISQS…RDWR) and 226–250 (HQGK…VDPC).

Belongs to the DNAAF19/PR46b family. In terms of assembly, homodimer.

It localises to the cytoplasm. The protein resides in the cell projection. The protein localises to the cilium. It is found in the flagellum. Its function is as follows. Dynein-attachment factor required for cilia motility. The chain is Dynein axonemal assembly factor 19 homolog (PR46b) from Chlamydomonas reinhardtii (Chlamydomonas smithii).